The primary structure comprises 200 residues: MPRWEAAALLAAIVGVCVWSDDPGKVISDRYAVYWNRSNPRFHRGDYTVEVSINDYLDIYCPHYEEPLPAERMERYVLYMVNYEGHASCDHRQKGFKRWECNRPDSPSGPLKFSEKFQLFTPFSLGFEFRPGHEYYYISASPLNVVDRPCLKLKVYVRPTNDSLYESPEPIFTSNNSCCSLAVPRAVLVAAPVFWTLLGS.

The first 22 residues, 1–22 (MPRWEAAALLAAIVGVCVWSDD), serve as a signal peptide directing secretion. An Ephrin RBD domain is found at 28-161 (SDRYAVYWNR…KLKVYVRPTN (134 aa)). Asn36 is a glycosylation site (N-linked (GlcNAc...) asparagine). Disulfide bonds link Cys61–Cys101 and Cys89–Cys150. Asn161 and Asn175 each carry an N-linked (GlcNAc...) asparagine glycan. Asn175 is lipidated: GPI-anchor amidated asparagine. Residues 176-200 (NSCCSLAVPRAVLVAAPVFWTLLGS) constitute a propeptide, removed in mature form.

It belongs to the ephrin family. In terms of assembly, binds to the receptor tyrosine kinases EPHA3, EPHA4 and EPHA5. Interacts with EPHA8; activates EPHA8. In terms of tissue distribution, expressed in a gradient across the tectum being more strongly expressed at the posterior pole.

Its subcellular location is the cell membrane. Cell surface GPI-bound ligand for Eph receptors, a family of receptor tyrosine kinases which are crucial for migration, repulsion and adhesion during neuronal, vascular and epithelial development. Binds promiscuously Eph receptors residing on adjacent cells, leading to contact-dependent bidirectional signaling into neighboring cells. The signaling pathway downstream of the receptor is referred to as forward signaling while the signaling pathway downstream of the ephrin ligand is referred to as reverse signaling. With the EPHA2 receptor may play a role in bone remodeling through regulation of osteoclastogenesis and osteoblastogenesis. The chain is Ephrin-A2 (EFNA2) from Gallus gallus (Chicken).